A 119-amino-acid polypeptide reads, in one-letter code: MARVKRAKNARKNHKKVLKLAKGYYGGKSKLFKTANESVIRALRNSYVGRKNKKRDYRRLWIARINAATRINGLSYSKFMNGIKLAGIDINRKMLSEIAINDAKAFADLVEVAKKQLNA.

The protein belongs to the bacterial ribosomal protein bL20 family.

Its function is as follows. Binds directly to 23S ribosomal RNA and is necessary for the in vitro assembly process of the 50S ribosomal subunit. It is not involved in the protein synthesizing functions of that subunit. This Clostridium botulinum (strain Alaska E43 / Type E3) protein is Large ribosomal subunit protein bL20.